Here is a 1045-residue protein sequence, read N- to C-terminus: Extracellular serine protease (1045 aa).

The first 27 residues, 1–27 (MILNKRLKLAYCVFLGCYGLSIHSSLA), serve as a signal peptide directing secretion. The region spanning 49-397 (QWGLEAISAE…WGRVNLRDAI (349 aa)) is the Peptidase S8 domain. Catalysis depends on charge relay system residues D76, H112, and S341. Positions 646-1045 (SLASTENEKA…SVNAGLTWRF (400 aa)) are cleaved as a propeptide — translocator domain; removed in mature form. Residues 769–1045 (IKADDNGAWA…SVNAGLTWRF (277 aa)) enclose the Autotransporter domain.

It belongs to the peptidase S8 family.

It is found in the secreted. The protein is Extracellular serine protease of Serratia marcescens.